The chain runs to 464 residues: Cysteine--tRNA ligase (464 aa).

Cysteine 28 contacts Zn(2+). The short motif at 30-40 (ITAYDFCHIGH) is the 'HIGH' region element. Positions 210, 235, and 239 each coordinate Zn(2+). Positions 267–271 (KMSKS) match the 'KMSKS' region motif. Residue lysine 270 participates in ATP binding.

It belongs to the class-I aminoacyl-tRNA synthetase family. Monomer. Requires Zn(2+) as cofactor.

The protein localises to the cytoplasm. It catalyses the reaction tRNA(Cys) + L-cysteine + ATP = L-cysteinyl-tRNA(Cys) + AMP + diphosphate. In Buchnera aphidicola subsp. Baizongia pistaciae (strain Bp), this protein is Cysteine--tRNA ligase.